A 147-amino-acid polypeptide reads, in one-letter code: Large ribosomal subunit protein bL9 (147 aa).

This sequence belongs to the bacterial ribosomal protein bL9 family.

Functionally, binds to the 23S rRNA. In Clostridium kluyveri (strain NBRC 12016), this protein is Large ribosomal subunit protein bL9.